The following is a 134-amino-acid chain: Small ribosomal subunit protein uS9 (134 aa).

The tract at residues 114–134 is disordered; that stretch reads QKESKNFGGPGARAKYQKSYR.

Belongs to the universal ribosomal protein uS9 family.

The polypeptide is Small ribosomal subunit protein uS9 (Methanosarcina acetivorans (strain ATCC 35395 / DSM 2834 / JCM 12185 / C2A)).